A 1310-amino-acid polypeptide reads, in one-letter code: Zinc finger protein 521 (1310 aa).

Basic residues predominate over residues 1 to 10 (MSRRKQAKPR). Residues 1–46 (MSRRKQAKPRSLKDPNCKLEDTSEDGESPDCKKRQEEGDELEEEEA) are disordered. A compositionally biased stretch (basic and acidic residues) spans 11 to 21 (SLKDPNCKLED). A C2H2-type 1; degenerate zinc finger spans residues 48–68 (HSCDSCLQVFESLSDITEHKI). The disordered stretch occupies residues 82-106 (DPTCSWPASSPSSKDQASPIHGEGF). Positions 87–97 (WPASSPSSKDQ) are enriched in polar residues. 7 consecutive C2H2-type zinc fingers follow at residues 119–141 (YPCQ…EQSH), 147–169 (FKCT…IKLH), 175–197 (YHCS…LKTH), 203–225 (YKCA…MQVH), 247–270 (QKCS…AECH), 282–305 (LQCM…EQIH), and 311–333 (NSCN…MDSH). The C2H2-type 9; degenerate zinc-finger motif lies at 404-428 (YSCIYCSKQLFSSLAVLQIHLKTMH). 3 C2H2-type zinc fingers span residues 436-459 (HICQ…KQVH), 476-499 (YQCN…RSSH), and 512-535 (FFCP…RQVH). The C2H2-type 13; atypical zinc finger occupies 559–584 (YSCSYCTNSPIFNSVLKLNKHIKENH). 7 C2H2-type zinc fingers span residues 633–655 (YICN…LKTH), 663–685 (LTCP…VTIH), 693–716 (YICE…LDMH), 721–744 (FRCT…AVKH), 751–774 (YRCT…KHNH), 782–804 (HKCI…ITTH), and 808–831 (YNCK…REKH). A C2H2-type 21; degenerate zinc finger spans residues 885–907 (YGCDICGAAYTMESLLQNHQLRD). 3 consecutive C2H2-type zinc fingers follow at residues 929 to 951 (YKCN…MQTH), 958 to 980 (YMCP…KVTH), and 1019 to 1041 (FRCV…GTFH). The segment at 1064–1082 (YKCASCLKEFRSKQDLVKL) adopts a C2H2-type 25; degenerate zinc-finger fold. 5 consecutive C2H2-type zinc fingers follow at residues 1138–1161 (TRCS…QTIH), 1194–1216 (YQCI…VANH), 1224–1246 (HECK…LIEH), 1255–1278 (FKCP…FSAH), and 1285–1308 (YDCA…MSQH).

This sequence belongs to the krueppel C2H2-type zinc-finger protein family.

The protein localises to the nucleus. In terms of biological role, transcription factor that can both act as an activator or a repressor depending on the context. Involved in BMP signaling and in the regulation of the immature compartment of the hematopoietic system. The chain is Zinc finger protein 521 (znf521) from Xenopus laevis (African clawed frog).